The sequence spans 569 residues: 4-hydroxy-7-methoxy-3-oxo-3,4-dihydro-2H-1,4-benzoxazin-2-yl glucoside beta-D-glucosidase 1a, chloroplastic (569 aa).

The N-terminal 50 residues, M1–A50, are a transit peptide targeting the chloroplast. A beta-D-glucoside is bound by residues Q92, H194, and N239–E240. E240 serves as the catalytic Proton donor. The cysteines at positions 259 and 265 are disulfide-linked. A beta-D-glucoside is bound by residues Y383, E456, W504, E511 to W512, and F520. The active-site Nucleophile is E456.

It belongs to the glycosyl hydrolase 1 family. As to quaternary structure, homo- and heterohexamers. In terms of tissue distribution, expressed in young seedlings early after germination.

It localises to the plastid. The protein localises to the chloroplast. It carries out the reaction Hydrolysis of terminal, non-reducing beta-D-glucosyl residues with release of beta-D-glucose.. It catalyses the reaction DIMBOA beta-D-glucoside + H2O = DIMBOA + D-glucose. The enzyme catalyses DIBOA beta-D-glucoside + H2O = DIBOA + D-glucose. Acts in defense of young plant parts against pests via the production of hydroxamic acids from hydroxamic acid glucosides. Enzymatic activity is highly correlated with plant growth. The preferred substrate is DIMBOA-beta-D-glucoside. The sequence is that of 4-hydroxy-7-methoxy-3-oxo-3,4-dihydro-2H-1,4-benzoxazin-2-yl glucoside beta-D-glucosidase 1a, chloroplastic (GLU1A) from Triticum aestivum (Wheat).